Reading from the N-terminus, the 272-residue chain is MKVAFVIRKDCKRCATIAKSIIELIPPDWEKIYDTEAAKFLGGVGKDITEISADIIIAIGGDGTVLRILQNAKGPVLGINMGGLGFLTEIEIDEVGSSTYKLIRGEYKINEAMKLKVYINGRRLEDCTNEAVVHTDRIARIRQFKIYVDGHFLTTIKSDGVIVATPTGSSSYSSSAGGPLLLPTVRGMVISYLAPYSSRIKPVVVPSESTVEIKIAGNDQDSLLILDGQKEYKIKSGDTVSISMSEEKARFVSFRESIYDRLRDKVIKHVVN.

Asp62 serves as the catalytic Proton acceptor. NAD(+)-binding positions include 62–63 (DG), Arg67, 129–130 (NE), Arg140, Lys157, Asp159, 170–175 (SSYSSS), Ala194, and Gln229.

It belongs to the NAD kinase family. A divalent metal cation is required as a cofactor.

Its subcellular location is the cytoplasm. It catalyses the reaction NAD(+) + ATP = ADP + NADP(+) + H(+). In terms of biological role, involved in the regulation of the intracellular balance of NAD and NADP, and is a key enzyme in the biosynthesis of NADP. Catalyzes specifically the phosphorylation on 2'-hydroxyl of the adenosine moiety of NAD to yield NADP. The protein is NAD kinase of Thermoplasma volcanium (strain ATCC 51530 / DSM 4299 / JCM 9571 / NBRC 15438 / GSS1).